The chain runs to 113 residues: Hydrogenase maturation factor HypA (113 aa).

Histidine 2 lines the Ni(2+) pocket. Residues cysteine 73, cysteine 76, cysteine 89, and cysteine 92 each coordinate Zn(2+).

It belongs to the HypA/HybF family.

Its function is as follows. Involved in the maturation of [NiFe] hydrogenases. Required for nickel insertion into the metal center of the hydrogenase. The polypeptide is Hydrogenase maturation factor HypA (Paracoccus denitrificans (strain Pd 1222)).